Reading from the N-terminus, the 341-residue chain is Protein CbhE (341 aa).

The span at 287–297 (IDEENTSDSSE) shows a compositional bias: acidic residues. The tract at residues 287 to 341 (IDEENTSDSSEEGTSKNRFRDTLFSNVPDSSSDSENEQEREKKELAGKTPSFRLC) is disordered. Positions 323 to 332 (EQEREKKELA) are enriched in basic and acidic residues.

The protein localises to the cytoplasm. May be involved in the pathogenesis of acute Q fever. This is Protein CbhE (cbhE) from Coxiella burnetii (strain RSA 493 / Nine Mile phase I).